Consider the following 635-residue polypeptide: Histone-lysine N-methyltransferase Su(var)3-9 (635 aa).

The interval 81–188 is binds to Su(var)205 and Suvar(3)7; that stretch reads ERLSEKKIKN…LNGFAKLKRR (108 aa). Disordered regions lie at residues 123–161 and 191–210; these read RLCT…NSSG and SCVG…MGVI. Low complexity-rich tracts occupy residues 128 to 139 and 147 to 161; these read PASSSMPASTSS and RSTS…NSSG. The Chromo domain maps to 219–278; the sequence is YVVERIECVEMDQYQPVFFVKWLGYHDSENTWESLANVADCAEMEKFVERHQQLYETYIA. The region spanning 410–474 is the Pre-SET domain; the sequence is VGCKCTEDTE…SCSNRLVQHG (65 aa). Positions 412, 414, 421, 427, 428, 456, 460, 462, and 466 each coordinate Zn(2+). An SET domain is found at 477–603; it reads VPLVLFKTAN…AGEELSFDYI (127 aa). S-adenosyl-L-methionine is bound by residues 488–490, Tyr-531, and 560–561; these read SGW and NH. 4 residues coordinate Zn(2+): Cys-563, Cys-623, Cys-625, and Cys-630. In terms of domain architecture, Post-SET spans 619–635; that stretch reads VRVECRCGRDNCRKVLF.

Belongs to the class V-like SAM-binding methyltransferase superfamily. Histone-lysine methyltransferase family. Suvar3-9 subfamily. As to quaternary structure, interacts with Su(var)205 and Su(var)3-7. Probably associates with HDAC1/Rpd3. Interacts with Rrp6; the interaction promotes association of Rrp6 with a subset of genomic loci.

It localises to the nucleus. The protein localises to the chromosome. It is found in the centromere. The enzyme catalyses L-lysyl(9)-[histone H3] + 3 S-adenosyl-L-methionine = N(6),N(6),N(6)-trimethyl-L-lysyl(9)-[histone H3] + 3 S-adenosyl-L-homocysteine + 3 H(+). Histone methyltransferase that specifically trimethylates 'Lys-9' of histone H3 using monomethylated H3 'Lys-9' as substrate. H3 'Lys-9' trimethylation represents a specific tag for epigenetic transcriptional repression by recruiting Su(var)205/HP1 to methylated histones. Mainly functions in heterochromatin regions, thereby playing a central role in the establishment of constitutive heterochromatin at pericentric regions. Involved in heterochromatic gene silencing including the modification of position-effect-variegation. The polypeptide is Histone-lysine N-methyltransferase Su(var)3-9 (Su(var)3-9) (Drosophila melanogaster (Fruit fly)).